The sequence spans 323 residues: Annexin A3 (323 aa).

Ala2 is subject to N-acetylalanine. Annexin repeat units follow at residues 18-89 (FSPS…ALVT), 90-161 (PPAV…TLAD), 173-245 (HLAK…AIVN), and 249-320 (NTPA…KICG). Residue Thr267 is modified to Phosphothreonine.

The protein belongs to the annexin family.

Inhibitor of phospholipase A2, also possesses anti-coagulant properties. Also cleaves the cyclic bond of inositol 1,2-cyclic phosphate to form inositol 1-phosphate. This Homo sapiens (Human) protein is Annexin A3 (ANXA3).